The sequence spans 1030 residues: Leucine-rich repeat and coiled-coil domain-containing protein 1 (1030 aa).

6 LRR repeats span residues 7 to 28 (RNRELSLMDKQISSLLEICLNS), 29 to 50 (NLYSINLHCNQISKIEGLRHLC), 51 to 72 (YLQHLDLSSNLITKIEGLDSLA), 73 to 94 (SLQSLNLSCNKLTRVEGLEKLF), 95 to 116 (NLKKLNLSYNSIQDLTGLIPLH), and 121 to 142 (KLSHLYLHSNCINSIDEVLQST). An LRRCT domain is found at 160-200 (NPVCHALGYREIILENLPQLNSLDGLDRSGDPVTAHEVDSM). Residues 298-401 (KSEQTKLKAK…GQILGKPHAI (104 aa)) form a disordered region. The segment covering 300 to 311 (EQTKLKAKRDTD) has biased composition (basic and acidic residues). Composition is skewed to polar residues over residues 338–368 (KTSQTSKQQANQQLKGRTSYSELKQNVSRKQ) and 378–393 (ETSLSSGRTDTDSTGQ). The stretch at 432–645 (RERRWKAEQV…DLEDEFRAAL (214 aa)) forms a coiled coil.

Belongs to the LRRCC1 family.

The protein resides in the cytoplasm. The protein localises to the cytoskeleton. Its subcellular location is the microtubule organizing center. It is found in the centrosome. It localises to the centriole. In terms of biological role, required for the organization of the mitotic spindle. Maintains the structural integrity of centrosomes during mitosis. This is Leucine-rich repeat and coiled-coil domain-containing protein 1 (lrrcc1) from Xenopus laevis (African clawed frog).